Consider the following 211-residue polypeptide: Beta-crystallin B3 (211 aa).

Methionine 1 is subject to N-acetylmethionine. Alanine 2 carries the N-acetylalanine; in Beta-crystallin B3, N-terminally processed modification. Positions 2–23 (AEQHGAPEQAAAGKSHGGLGGS) are N-terminal arm. Beta/gamma crystallin 'Greek key' domains lie at 24–63 (YKVT…QVES) and 64–108 (GPWL…RPLH). Positions 109–113 (IDGPD) are connecting peptide. Beta/gamma crystallin 'Greek key' domains follow at residues 114 to 155 (HKLH…RVIN) and 156 to 198 (GTWV…RRIR). Residues 200–211 (QKWHKRGCFLSS) are C-terminal arm.

The protein belongs to the beta/gamma-crystallin family. Homo/heterodimer, or complexes of higher-order. The structure of beta-crystallin oligomers seems to be stabilized through interactions between the N-terminal arms.

Crystallins are the dominant structural components of the vertebrate eye lens. This Mus musculus (Mouse) protein is Beta-crystallin B3 (Crybb3).